The primary structure comprises 300 residues: Tyrosine recombinase XerD (300 aa).

The Core-binding (CB) domain occupies 5 to 90 (YQCDPLIDAF…SLRRFYNYLL (86 aa)). Residues 111–294 (HLPDSLSESQ…ARARLQELHQ (184 aa)) form the Tyr recombinase domain. Active-site residues include Arg151, Lys175, His246, Arg249, and His272. Tyr281 (O-(3'-phospho-DNA)-tyrosine intermediate) is an active-site residue.

The protein belongs to the 'phage' integrase family. XerD subfamily. As to quaternary structure, forms a cyclic heterotetrameric complex composed of two molecules of XerC and two molecules of XerD.

It localises to the cytoplasm. Its function is as follows. Site-specific tyrosine recombinase, which acts by catalyzing the cutting and rejoining of the recombining DNA molecules. The XerC-XerD complex is essential to convert dimers of the bacterial chromosome into monomers to permit their segregation at cell division. It also contributes to the segregational stability of plasmids. This chain is Tyrosine recombinase XerD, found in Shewanella oneidensis (strain ATCC 700550 / JCM 31522 / CIP 106686 / LMG 19005 / NCIMB 14063 / MR-1).